A 139-amino-acid chain; its full sequence is D-ribose pyranase (139 aa).

The active-site Proton donor is the H20. Residues D28, H106, and 128-130 (YAN) each bind substrate.

It belongs to the RbsD / FucU family. RbsD subfamily. In terms of assembly, homodecamer.

The protein localises to the cytoplasm. It catalyses the reaction beta-D-ribopyranose = beta-D-ribofuranose. It functions in the pathway carbohydrate metabolism; D-ribose degradation; D-ribose 5-phosphate from beta-D-ribopyranose: step 1/2. Functionally, catalyzes the interconversion of beta-pyran and beta-furan forms of D-ribose. This Haemophilus influenzae (strain PittGG) protein is D-ribose pyranase.